Here is a 346-residue protein sequence, read N- to C-terminus: tRNA N6-adenosine threonylcarbamoyltransferase (346 aa).

Positions 111 and 115 each coordinate Fe cation. Residues 134-138, aspartate 167, glycine 180, and asparagine 279 contribute to the substrate site; that span reads LVSGG. Aspartate 307 contacts Fe cation.

The protein belongs to the KAE1 / TsaD family. The cofactor is Fe(2+).

It localises to the cytoplasm. The catalysed reaction is L-threonylcarbamoyladenylate + adenosine(37) in tRNA = N(6)-L-threonylcarbamoyladenosine(37) in tRNA + AMP + H(+). Required for the formation of a threonylcarbamoyl group on adenosine at position 37 (t(6)A37) in tRNAs that read codons beginning with adenine. Is involved in the transfer of the threonylcarbamoyl moiety of threonylcarbamoyl-AMP (TC-AMP) to the N6 group of A37, together with TsaE and TsaB. TsaD likely plays a direct catalytic role in this reaction. The protein is tRNA N6-adenosine threonylcarbamoyltransferase of Burkholderia thailandensis (strain ATCC 700388 / DSM 13276 / CCUG 48851 / CIP 106301 / E264).